We begin with the raw amino-acid sequence, 106 residues long: Large ribosomal subunit protein uL24 (106 aa).

Positions 1–20 (MNKRAKSKNREPLRKSPVKR) are disordered. Over residues 8-20 (KNREPLRKSPVKR) the composition is skewed to basic and acidic residues.

This sequence belongs to the universal ribosomal protein uL24 family. In terms of assembly, part of the 50S ribosomal subunit.

Functionally, one of two assembly initiator proteins, it binds directly to the 5'-end of the 23S rRNA, where it nucleates assembly of the 50S subunit. In terms of biological role, one of the proteins that surrounds the polypeptide exit tunnel on the outside of the subunit. The chain is Large ribosomal subunit protein uL24 from Methylacidiphilum infernorum (isolate V4) (Methylokorus infernorum (strain V4)).